A 231-amino-acid chain; its full sequence is 7-cyano-7-deazaguanine synthase (231 aa).

Position 8-18 (8-18 (FSGGQDSTTCL)) interacts with ATP. Zn(2+)-binding residues include Cys-188, Cys-197, Cys-200, and Cys-203.

The protein belongs to the QueC family. Requires Zn(2+) as cofactor.

The catalysed reaction is 7-carboxy-7-deazaguanine + NH4(+) + ATP = 7-cyano-7-deazaguanine + ADP + phosphate + H2O + H(+). Its pathway is purine metabolism; 7-cyano-7-deazaguanine biosynthesis. Its function is as follows. Catalyzes the ATP-dependent conversion of 7-carboxy-7-deazaguanine (CDG) to 7-cyano-7-deazaguanine (preQ(0)). This is 7-cyano-7-deazaguanine synthase from Escherichia fergusonii (strain ATCC 35469 / DSM 13698 / CCUG 18766 / IAM 14443 / JCM 21226 / LMG 7866 / NBRC 102419 / NCTC 12128 / CDC 0568-73).